We begin with the raw amino-acid sequence, 724 residues long: NAD(+) hydrolase SARM1 (724 aa).

The transit peptide at 1–27 (MVLTLLFSAYKLCRFFTMSGPRPGADR) directs the protein to the mitochondrion. A disordered region spans residues 24–56 (GADRLTVPGPDRSGGASPWWAAGGRGSREVSPG). Residues 36–45 (SGGASPWWAA) are compositionally biased toward low complexity. The ARM 1 repeat unit spans residues 60 to 100 (EVQGALERSLPELQQALSELKQASAARAVGAGLAEVFQLVE). NAD(+) is bound by residues tryptophan 103, arginine 110, 149 to 157 (EQILVAENR), and 190 to 193 (HMFK). ARM repeat units lie at residues 114–153 (QGLC…QILV), 155–193 (ENRD…HMFK), 196–235 (EETC…NCAL), 237–280 (GGQT…LATN), 281–314 (KEVE…CLVD), 315–354 (ASDT…AEAA), and 359–402 (QGKT…EEVP). SAM domains lie at 412 to 476 (WKEA…LKTF) and 486 to 548 (NLAD…MLHS). 2 positions are modified to phosphoserine: serine 548 and serine 558. The 144-residue stretch at 560-703 (DTPDVFISYR…KIIRFLQGRP (144 aa)) folds into the TIR domain. Residues 569 to 570 (RR) and glutamate 599 contribute to the NAD(+) site. Residue glutamate 642 is part of the active site. Residues 703–716 (PSQDSSAGSDTSLE) show a composition bias toward polar residues. The disordered stretch occupies residues 703-724 (PSQDSSAGSDTSLEGATPMGLP).

It belongs to the SARM1 family. In terms of assembly, homooctamer; forms an octameric ring via SAM domains. Interacts with TICAM1/TRIF and thereby interferes with TICAM1/TRIF function. Interacts with SDC2 (via cytoplasmic domain) and MAPK10/JNK3. In terms of processing, phosphorylation at Ser-548 by JNK kinases (MAPK8, MAPK9 and /or MAPK10) enhance the NAD(+) hydrolase (NADase) activity. Phosphorylation at Ser-548 and subsequent activation takes place in response to oxidative stress conditions and inhibits mitochondrial respiration. As to expression, widely expressed in the brain and neurons (at protein level). Expressed in photoreceptor cells of the neural retina.

The protein localises to the cytoplasm. It localises to the cell projection. Its subcellular location is the axon. It is found in the dendrite. The protein resides in the synapse. The protein localises to the mitochondrion. The catalysed reaction is NAD(+) + H2O = ADP-D-ribose + nicotinamide + H(+). The enzyme catalyses NAD(+) = cyclic ADP-beta-D-ribose + nicotinamide + H(+). It catalyses the reaction NADP(+) + H2O = ADP-D-ribose 2'-phosphate + nicotinamide + H(+). Autoinhibited: in the inactive state, the enzymatic TIR domain is held apart by the autoinhibiting ARM repeats. NAD(+)-binding to ARM repeats maintains an inactive state by promoting interaction between ARM repeats and the TIR domain, thereby facilitating inhibition of the enzymatic TIR domain. Following activation, possibly by nicotinamide mononucleotide (NMN), auto-inhibitory interactions are released, allowing self-association of the TIR domains and subsequent activation of the NAD(+) hydrolase (NADase) activity. Self-association of TIR domains is facilitated by the octamer of SAM domains. In terms of biological role, NAD(+) hydrolase, which plays a key role in axonal degeneration following injury by regulating NAD(+) metabolism. Acts as a negative regulator of MYD88- and TRIF-dependent toll-like receptor signaling pathway by promoting Wallerian degeneration, an injury-induced form of programmed subcellular death which involves degeneration of an axon distal to the injury site. Wallerian degeneration is triggered by NAD(+) depletion: in response to injury, SARM1 is activated and catalyzes cleavage of NAD(+) into ADP-D-ribose (ADPR), cyclic ADPR (cADPR) and nicotinamide; NAD(+) cleavage promoting cytoskeletal degradation and axon destruction. Also able to hydrolyze NADP(+), but not other NAD(+)-related molecules. Can activate neuronal cell death in response to stress. Regulates dendritic arborization through the MAPK4-JNK pathway. Involved in innate immune response: inhibits both TICAM1/TRIF- and MYD88-dependent activation of JUN/AP-1, TRIF-dependent activation of NF-kappa-B and IRF3, and the phosphorylation of MAPK14/p38. The polypeptide is NAD(+) hydrolase SARM1 (Mus musculus (Mouse)).